A 277-amino-acid polypeptide reads, in one-letter code: Probable diphthine methyl ester synthase (277 aa).

S-adenosyl-L-methionine is bound by residues Leu9, Asp89, Gly92, 117-118 (SV), Leu168, Leu227, and His252.

The protein belongs to the diphthine synthase family.

It catalyses the reaction 2-[(3S)-amino-3-carboxypropyl]-L-histidyl-[translation elongation factor 2] + 4 S-adenosyl-L-methionine = diphthine methyl ester-[translation elongation factor 2] + 4 S-adenosyl-L-homocysteine + 3 H(+). The protein operates within protein modification; peptidyl-diphthamide biosynthesis. In terms of biological role, S-adenosyl-L-methionine-dependent methyltransferase that catalyzes four methylations of the modified target histidine residue in translation elongation factor 2 (EF-2), to form an intermediate called diphthine methyl ester. The four successive methylation reactions represent the second step of diphthamide biosynthesis. The protein is Probable diphthine methyl ester synthase of Arabidopsis thaliana (Mouse-ear cress).